The primary structure comprises 264 residues: 3-methyl-2-oxobutanoate hydroxymethyltransferase (264 aa).

2 residues coordinate Mg(2+): Asp-45 and Asp-84. Residues 45 to 46, Asp-84, and Lys-113 each bind 3-methyl-2-oxobutanoate; that span reads DS. Glu-115 provides a ligand contact to Mg(2+). Glu-182 functions as the Proton acceptor in the catalytic mechanism.

This sequence belongs to the PanB family. As to quaternary structure, homodecamer; pentamer of dimers. The cofactor is Mg(2+).

Its subcellular location is the cytoplasm. The catalysed reaction is 3-methyl-2-oxobutanoate + (6R)-5,10-methylene-5,6,7,8-tetrahydrofolate + H2O = 2-dehydropantoate + (6S)-5,6,7,8-tetrahydrofolate. The protein operates within cofactor biosynthesis; (R)-pantothenate biosynthesis; (R)-pantoate from 3-methyl-2-oxobutanoate: step 1/2. Functionally, catalyzes the reversible reaction in which hydroxymethyl group from 5,10-methylenetetrahydrofolate is transferred onto alpha-ketoisovalerate to form ketopantoate. The protein is 3-methyl-2-oxobutanoate hydroxymethyltransferase of Caldicellulosiruptor bescii (strain ATCC BAA-1888 / DSM 6725 / KCTC 15123 / Z-1320) (Anaerocellum thermophilum).